A 179-amino-acid polypeptide reads, in one-letter code: Trypsin inhibitor (179 aa).

Glutamine 1 is modified (pyrrolidone carboxylic acid). 2 disulfides stabilise this stretch: cysteine 40-cysteine 85 and cysteine 132-cysteine 143.

It belongs to the protease inhibitor I3 (leguminous Kunitz-type inhibitor) family. In terms of assembly, heterodimer of an alpha and a beta chain linked by a disulfide bond. Abundant in dry seeds.

It localises to the secreted. Functionally, inhibits trypsin, plasmin, human plasma kallikrein, chymotrypsin and factor XIIa activity. In Leucaena leucocephala (White popinac), this protein is Trypsin inhibitor.